Here is a 207-residue protein sequence, read N- to C-terminus: Histidine biosynthesis bifunctional protein HisIE (207 aa).

Residues 1 to 117 are phosphoribosyl-AMP cyclohydrolase; that stretch reads MSLVTTINWE…GKQEQPALVF (117 aa). Positions 118–207 are phosphoribosyl-ATP pyrophosphohydrolase; the sequence is LHQLEQVLAN…TEKLQERHNK (90 aa).

This sequence in the N-terminal section; belongs to the PRA-CH family. It in the C-terminal section; belongs to the PRA-PH family.

The protein localises to the cytoplasm. It catalyses the reaction 1-(5-phospho-beta-D-ribosyl)-ATP + H2O = 1-(5-phospho-beta-D-ribosyl)-5'-AMP + diphosphate + H(+). The catalysed reaction is 1-(5-phospho-beta-D-ribosyl)-5'-AMP + H2O = 1-(5-phospho-beta-D-ribosyl)-5-[(5-phospho-beta-D-ribosylamino)methylideneamino]imidazole-4-carboxamide. It functions in the pathway amino-acid biosynthesis; L-histidine biosynthesis; L-histidine from 5-phospho-alpha-D-ribose 1-diphosphate: step 2/9. Its pathway is amino-acid biosynthesis; L-histidine biosynthesis; L-histidine from 5-phospho-alpha-D-ribose 1-diphosphate: step 3/9. The polypeptide is Histidine biosynthesis bifunctional protein HisIE (Photobacterium profundum (strain SS9)).